Here is a 130-residue protein sequence, read N- to C-terminus: uncharacterized protein (130 aa).

Positions 1 to 28 (MELAKERNGPHQKHHGQCQNHCTSPNTV) are disordered. Residues 17–28 (QCQNHCTSPNTV) show a composition bias toward polar residues.

This is an uncharacterized protein from Saccharomyces cerevisiae (strain ATCC 204508 / S288c) (Baker's yeast).